The following is a 208-amino-acid chain: MLQQDSNDDTEDVSLFDAEEETTNRPKKSRIRHPVASFFHLFFRVSAIIVYLLCELFSSSFIACMVTIILLLSCDFWAVKNVTGRLMVGLRWWNHIDEDGKSHWVFESRKASPQEGKTVSEAESRIFWLGLVACPVLWVVFAFSALFSFRVKWLAVVIMGVVLQGANLYGYIRCKVGSRKNLTSMATTYLGRQFLRQTTGDTQTSSGE.

M1 carries the N-acetylmethionine modification. Residues 1–21 show a composition bias toward acidic residues; the sequence is MLQQDSNDDTEDVSLFDAEEE. The disordered stretch occupies residues 1-27; the sequence is MLQQDSNDDTEDVSLFDAEEETTNRPK. 4 consecutive transmembrane segments (helical) span residues 34–53, 54–72, 126–146, and 152–172; these read PVAS…VYLL, CELF…ILLL, IFWL…FSAL, and KWLA…YGYI.

The protein belongs to the TVP23 family.

The protein localises to the membrane. The polypeptide is Golgi apparatus membrane protein TVP23 homolog B (TVP23B) (Bos taurus (Bovine)).